Consider the following 298-residue polypeptide: Zinc transport system membrane protein TroC (298 aa).

A run of 8 helical transmembrane segments spans residues 16–36, 41–61, 68–88, 97–117, 144–164, 187–207, 229–249, and 255–275; these read VVLGTLFLGLGSGLVGSFAVL, LFGDAVSHATLPGIVIAFLLT, ILLLGAALSGLVGTVVMLMVM, GAQGIVLGVFLGFGFLLLTHV, VLLIIAMEVVIGLLVLLFWKE, FMLTALIVVAVVVGVQAVGVI, VLCALAALFGGVSGVSGSVVS, and LSTGPVIVLVLTGIALVSIML.

Belongs to the ABC-3 integral membrane protein family.

It localises to the cell membrane. Its function is as follows. Part of an ATP-driven transport system TroABCD for zinc. This chain is Zinc transport system membrane protein TroC (troC), found in Treponema pallidum (strain Nichols).